Consider the following 305-residue polypeptide: Foldase protein PrsA (305 aa).

Residues Met-1 to Gly-19 form the signal peptide. Cys-20 carries the N-palmitoyl cysteine lipid modification. Cys-20 carries S-diacylglycerol cysteine lipidation. A PpiC domain is found at Glu-136–Lys-235.

It belongs to the PrsA family.

It is found in the cell membrane. The enzyme catalyses [protein]-peptidylproline (omega=180) = [protein]-peptidylproline (omega=0). In terms of biological role, plays a major role in protein secretion by helping the post-translocational extracellular folding of several secreted proteins. This Levilactobacillus brevis (strain ATCC 367 / BCRC 12310 / CIP 105137 / JCM 1170 / LMG 11437 / NCIMB 947 / NCTC 947) (Lactobacillus brevis) protein is Foldase protein PrsA.